Reading from the N-terminus, the 325-residue chain is Dimethylallyltranstransferase (325 aa).

Residues Arg-54 and His-84 each contribute to the isopentenyl diphosphate site. Positions 91 and 95 each coordinate Mg(2+). A DDXXD motif motif is present at residues 91-95 (DRVVD). Arg-101 contributes to the isopentenyl diphosphate binding site. The short motif at 217-221 (RDIIA) is the DDXXD motif element.

This sequence belongs to the FPP/GGPP synthase family. Mg(2+) is required as a cofactor.

The catalysed reaction is isopentenyl diphosphate + dimethylallyl diphosphate = (2E)-geranyl diphosphate + diphosphate. The protein operates within isoprenoid biosynthesis; geranyl diphosphate biosynthesis; geranyl diphosphate from dimethylallyl diphosphate and isopentenyl diphosphate: step 1/1. Catalyzes the addition of isopentenyl diphosphate (IPP) onto dimethylallyl diphosphate (DMAPP) to form geranyl pyrophosphate (GPP). Is probably involved in the biosynthesis of decaprenyl diphosphate, which is required for mycobacterial cell wall synthesis. Could be required for host endothelial-cell invasion and/or intracellular survival. The protein is Dimethylallyltranstransferase of Mycobacterium tuberculosis (strain ATCC 25618 / H37Rv).